A 359-amino-acid chain; its full sequence is Fe-S cluster assembly protein DRE2 (359 aa).

An N-terminal SAM-like domain region spans residues 1-148 (MASTGRVLLL…KPDVAAQQAV (148 aa)). Disordered regions lie at residues 97–116 (NKAW…NDND) and 149–210 (PLKL…PSGV). A linker region spans residues 149–246 (PLKLGRRKKE…EDELLGEDDM (98 aa)). Over residues 152–164 (LGRRKKEKERRHP) the composition is skewed to basic residues. Over residues 167–183 (NDVTNGKVNAPSSNGVN) the composition is skewed to polar residues. Residues 184–200 (ASTSTATATATTTTTTT) show a composition bias toward low complexity. Residues Cys256, Cys267, Cys270, and Cys272 each contribute to the [2Fe-2S] cluster site. Residues 256 to 272 (CRPKPGKRRRACKDCSC) are fe-S binding site A. [4Fe-4S] cluster is bound by residues Cys322, Cys325, Cys333, and Cys336. 2 short sequence motifs (cx2C motif) span residues 322 to 325 (CGNC) and 333 to 336 (CDGC). Residues 322–336 (CGNCSLGDAFRCDGC) are fe-S binding site B.

Belongs to the anamorsin family. Monomer. Interacts with TAH18. Interacts with MIA40. [2Fe-2S] cluster serves as cofactor. The cofactor is [4Fe-4S] cluster.

The protein localises to the cytoplasm. The protein resides in the mitochondrion intermembrane space. In terms of biological role, component of the cytosolic iron-sulfur (Fe-S) protein assembly (CIA) machinery required for the maturation of extramitochondrial Fe-S proteins. Part of an electron transfer chain functioning in an early step of cytosolic Fe-S biogenesis, facilitating the de novo assembly of a [4Fe-4S] cluster on the scaffold complex CFD1-NBP35. Electrons are transferred to DRE2 from NADPH via the FAD- and FMN-containing protein TAH18. TAH18-DRE2 are also required for the assembly of the diferric tyrosyl radical cofactor of ribonucleotide reductase (RNR), probably by providing electrons for reduction during radical cofactor maturation in the catalytic small subunit RNR2. The chain is Fe-S cluster assembly protein DRE2 from Blastomyces gilchristii (strain SLH14081) (Blastomyces dermatitidis).